Reading from the N-terminus, the 469-residue chain is Acyltransferase clz18 (469 aa).

The next 7 membrane-spanning stretches (helical) occupy residues 21–41 (GLLSIIIFNAHLTPVIILGYD), 70–90 (LFTIPILKLVYSASPAVCLFF), 134–154 (LSLLAMASMIVPFALMKTGFF), 253–273 (ILAALAVLGVAVGSLECPLFW), 346–366 (GLIVPPRTWHSLGAVLVLYSL), 391–411 (IYLIHFCLVISFGPDLFSWVW), and 424–444 (VGFGITYSILFMAVLLTAAIF).

Belongs to the acyltransferase 3 family.

Its subcellular location is the membrane. Its pathway is secondary metabolite biosynthesis. In terms of biological role, acyltransferase; part of the gene cluster that mediates the biosynthesis of squalestatin S1 (SQS1, also known as zaragozic acid A), a heavily oxidized fungal polyketide that offers potent cholesterol lowering activity by targeting squalene synthase (SS). SQS1 is composed of a 2,8-dioxobicyclic[3.2.1]octane-3,4,5-tricarboxyclic acid core that is connected to two lipophilic polyketide arms. These initial steps feature the priming of an unusual benzoic acid starter unit onto the highly reducing polyketide synthase clz14, followed by oxaloacetate extension and product release to generate a tricarboxylic acid containing product. The phenylalanine ammonia lyase (PAL) clz10 and the acyl-CoA ligase clz12 are involved in transforming phenylalanine into benzoyl-CoA. The citrate synthase-like protein clz17 is involved in connecting the C-alpha-carbons of the hexaketide chain and oxaloacetate to afford the tricarboxylic acid unit. The potential hydrolytic enzymes, clz11 and clz13, are in close proximity to pks2 and may participate in product release. On the other side, the tetraketide arm is synthesized by a the squalestatin tetraketide synthase clz2 and enzymatically esterified to the core in the last biosynthetic step, by the acetyltransferase clz6. The biosynthesis of the tetraketide must involve 3 rounds of chain extension. After the first and second rounds methyl-transfer occurs, and in all rounds of extension the ketoreductase and dehydratase are active. The enoyl reductase and C-MeT of clz2 are not active in the final round of extension. The acetyltransferase clz6 appears to have a broad substrate selectivity for its acyl CoA substrate, allowing the in vitro synthesis of novel squalestatins. The biosynthesis of SQS1 requires several oxidative steps likely performed by oxidoreductases clz3, clz15 and clz16. Finally, in support of the identification of the cluster as being responsible for SQS1 production, the cluster contains a gene encoding a putative squalene synthase (SS) clz20, suggesting a likely mechanism for self-resistance. This is Acyltransferase clz18 from Cochliobolus lunatus (Filamentous fungus).